Here is a 158-residue protein sequence, read N- to C-terminus: Placenta growth factor (158 aa).

A signal peptide spans 1 to 18; that stretch reads MLVMKLFTCFLQVLAGLA. N-linked (GlcNAc...) asparagine glycosylation is found at N29 and N30. Disulfide bonds link C48/C90, C79/C125, and C83/C127. Residue N97 is glycosylated (N-linked (GlcNAc...) asparagine). Positions 136–158 are disordered; that stretch reads AERRKTKGKRKRSRNSQTEEPHP. The segment covering 137 to 149 has biased composition (basic residues); that stretch reads ERRKTKGKRKRSR.

The protein belongs to the PDGF/VEGF growth factor family. Antiparallel homodimer; disulfide-linked. Also found as heterodimer with VEGFA/VEGF.

It is found in the secreted. In terms of biological role, growth factor active in angiogenesis and endothelial cell growth, stimulating their proliferation and migration. It binds to the receptor FLT1/VEGFR-1. Also promotes cell tumor growth. This chain is Placenta growth factor (Pgf), found in Mus musculus (Mouse).